Consider the following 275-residue polypeptide: NAD kinase (275 aa).

D66 functions as the Proton acceptor in the catalytic mechanism. Residues 66–67, 138–139, H168, D170, 181–186, and V205 contribute to the NAD(+) site; these read DG, NE, and TAYNLS.

The protein belongs to the NAD kinase family. The cofactor is a divalent metal cation.

It is found in the cytoplasm. It catalyses the reaction NAD(+) + ATP = ADP + NADP(+) + H(+). Functionally, involved in the regulation of the intracellular balance of NAD and NADP, and is a key enzyme in the biosynthesis of NADP. Catalyzes specifically the phosphorylation on 2'-hydroxyl of the adenosine moiety of NAD to yield NADP. The protein is NAD kinase of Halorubrum lacusprofundi (strain ATCC 49239 / DSM 5036 / JCM 8891 / ACAM 34).